Reading from the N-terminus, the 370-residue chain is tRNA-specific 2-thiouridylase MnmA (370 aa).

Residues Ala-24–Ser-31 and Leu-50 contribute to the ATP site. Cys-119 (nucleophile) is an active-site residue. A disulfide bond links Cys-119 and Cys-215. Gly-143 contributes to the ATP binding site. An interaction with tRNA region spans residues Lys-165 to Gln-167. The Cysteine persulfide intermediate role is filled by Cys-215.

The protein belongs to the MnmA/TRMU family.

Its subcellular location is the cytoplasm. The enzyme catalyses S-sulfanyl-L-cysteinyl-[protein] + uridine(34) in tRNA + AH2 + ATP = 2-thiouridine(34) in tRNA + L-cysteinyl-[protein] + A + AMP + diphosphate + H(+). Catalyzes the 2-thiolation of uridine at the wobble position (U34) of tRNA, leading to the formation of s(2)U34. The polypeptide is tRNA-specific 2-thiouridylase MnmA (Wolbachia sp. subsp. Drosophila simulans (strain wRi)).